A 364-amino-acid chain; its full sequence is Probable dual-specificity RNA methyltransferase RlmN (364 aa).

The Proton acceptor role is filled by glutamate 106. The Radical SAM core domain occupies 112–350 (YPQRNTVCIS…SCTVRDTRGR (239 aa)). Cysteine 119 and cysteine 356 are oxidised to a cystine. [4Fe-4S] cluster-binding residues include cysteine 126, cysteine 130, and cysteine 133. S-adenosyl-L-methionine-binding positions include 177–178 (GE), serine 211, 234–236 (SLH), and asparagine 313. The S-methylcysteine intermediate role is filled by cysteine 356.

The protein belongs to the radical SAM superfamily. RlmN family. [4Fe-4S] cluster is required as a cofactor.

Its subcellular location is the cytoplasm. The catalysed reaction is adenosine(2503) in 23S rRNA + 2 reduced [2Fe-2S]-[ferredoxin] + 2 S-adenosyl-L-methionine = 2-methyladenosine(2503) in 23S rRNA + 5'-deoxyadenosine + L-methionine + 2 oxidized [2Fe-2S]-[ferredoxin] + S-adenosyl-L-homocysteine. The enzyme catalyses adenosine(37) in tRNA + 2 reduced [2Fe-2S]-[ferredoxin] + 2 S-adenosyl-L-methionine = 2-methyladenosine(37) in tRNA + 5'-deoxyadenosine + L-methionine + 2 oxidized [2Fe-2S]-[ferredoxin] + S-adenosyl-L-homocysteine. Specifically methylates position 2 of adenine 2503 in 23S rRNA and position 2 of adenine 37 in tRNAs. This Mycobacterium marinum (strain ATCC BAA-535 / M) protein is Probable dual-specificity RNA methyltransferase RlmN.